The sequence spans 400 residues: MGRAKKVVLAYSGGVDTSVCIPYLKHEWGVESVVALAVDLGQGAELEAIQAKALRAGAEQSLVREAVQALITDYAFPAIQANALYEQRYPLSTALARPLIAKLLVEVAEEVGADAVAHGCTGKGNDQVRFDLAIAALNPQLKVLAPAREWGMTREETIAYGERYGIPMPVQKSSPYSIDLNILGRSAEAGILEDADREPPEEVYALTRPISQTPDEPAYVEIEFEQGIPVGLDGQRLGPKALFEQLNSLAGLHGVGRIDMIENRLVGIKSREIYECPALMVLIQAHRELESLTLTRDVIHYKYGIETTYSQLIYNGLWYSPLREALDAFIRATQKSVTGVVRMRLHKGQAVCVGRRSPYSLYNPELATYGEGDQFDHRAAEGFIYIWGLPTRVWAQVHRG.

Position 10-18 (10-18 (AYSGGVDTS)) interacts with ATP. Y89 contributes to the L-citrulline binding site. G119 lines the ATP pocket. T121, N125, and D126 together coordinate L-aspartate. Position 125 (N125) interacts with L-citrulline. The L-citrulline site is built by R129, S177, S186, E262, and Y274.

The protein belongs to the argininosuccinate synthase family. Type 1 subfamily. In terms of assembly, homotetramer.

The protein localises to the cytoplasm. It catalyses the reaction L-citrulline + L-aspartate + ATP = 2-(N(omega)-L-arginino)succinate + AMP + diphosphate + H(+). It participates in amino-acid biosynthesis; L-arginine biosynthesis; L-arginine from L-ornithine and carbamoyl phosphate: step 2/3. The sequence is that of Argininosuccinate synthase from Synechococcus sp. (strain JA-2-3B'a(2-13)) (Cyanobacteria bacterium Yellowstone B-Prime).